The sequence spans 948 residues: UvrABC system protein A (948 aa).

33–40 (GLSGSGKS) provides a ligand contact to ATP. Residues 252–279 (CPICGFSIGELEPRMFSFNSPFGACPTC) form a C4-type zinc finger. ABC transporter domains follow at residues 309–587 (WIPT…KKSL) and 607–935 (ASDR…KYLK). 639 to 646 (GVSGSGKS) serves as a coordination point for ATP. A C4-type zinc finger spans residues 738–764 (CEACKGDGIIKIEMHFLPDVYVPCEVC).

It belongs to the ABC transporter superfamily. UvrA family. In terms of assembly, forms a heterotetramer with UvrB during the search for lesions.

It localises to the cytoplasm. Its function is as follows. The UvrABC repair system catalyzes the recognition and processing of DNA lesions. UvrA is an ATPase and a DNA-binding protein. A damage recognition complex composed of 2 UvrA and 2 UvrB subunits scans DNA for abnormalities. When the presence of a lesion has been verified by UvrB, the UvrA molecules dissociate. This is UvrABC system protein A from Staphylococcus aureus (strain N315).